A 306-amino-acid chain; its full sequence is uncharacterized protein (306 aa).

Residues 13–39 (NMLNEIAANNNLLNNKNNQTNQLNNNQ) adopt a coiled-coil conformation. Disordered regions lie at residues 44–76 (YNNQNNNQNYPQNYPQNSQQNFQQNSQQNHQQN), 103–204 (DSKE…QSGQ), and 216–249 (QKQLDKNQPEKIPSKPEKNQKQSHKPKLPPTMQH). Low complexity predominate over residues 119–201 (HQQPIQNNPS…QFAQPNQYNQ (83 aa)). Residues 218-235 (QLDKNQPEKIPSKPEKNQ) show a composition bias toward basic and acidic residues. The helical transmembrane segment at 279 to 299 (LFDYIIIPIALVLVFLFLVHP) threads the bilayer.

Its subcellular location is the membrane. This is an uncharacterized protein from Acanthamoeba polyphaga mimivirus (APMV).